The following is a 76-amino-acid chain: MSDPKYAYPYPAPGNYPQGPPPPVGVPPQYYPPPPPPPPPPPPPRKVGFLEGLLAALCCCCLVDECCCDPTIICFD.

The tract at residues 19–45 (GPPPPVGVPPQYYPPPPPPPPPPPPPR) is disordered. A helical membrane pass occupies residues 47–63 (VGFLEGLLAALCCCCLV).

It belongs to the CYSTM1 family. In terms of assembly, heterodimers. Interacts with CYSTM6, CYSTM7 and WIH1/CYSTM13. In terms of tissue distribution, mostly expressed in stems, siliques, leaves and flowers and, to a lower extent, in roots.

It localises to the cell membrane. Its subcellular location is the cytoplasm. Involved in resistance to abiotic stress. This chain is Protein CYSTEINE-RICH TRANSMEMBRANE MODULE 11, found in Arabidopsis thaliana (Mouse-ear cress).